We begin with the raw amino-acid sequence, 116 residues long: Large ribosomal subunit protein bL20 (116 aa).

This sequence belongs to the bacterial ribosomal protein bL20 family.

Functionally, binds directly to 23S ribosomal RNA and is necessary for the in vitro assembly process of the 50S ribosomal subunit. It is not involved in the protein synthesizing functions of that subunit. This Helicobacter pylori (strain P12) protein is Large ribosomal subunit protein bL20.